The sequence spans 529 residues: Bifunctional purine biosynthesis protein PurH (529 aa).

Residues 1–148 (MNNVRPIRRA…KNHKDTTIVV (148 aa)) form the MGS-like domain.

The protein belongs to the PurH family.

It catalyses the reaction (6R)-10-formyltetrahydrofolate + 5-amino-1-(5-phospho-beta-D-ribosyl)imidazole-4-carboxamide = 5-formamido-1-(5-phospho-D-ribosyl)imidazole-4-carboxamide + (6S)-5,6,7,8-tetrahydrofolate. The catalysed reaction is IMP + H2O = 5-formamido-1-(5-phospho-D-ribosyl)imidazole-4-carboxamide. It participates in purine metabolism; IMP biosynthesis via de novo pathway; 5-formamido-1-(5-phospho-D-ribosyl)imidazole-4-carboxamide from 5-amino-1-(5-phospho-D-ribosyl)imidazole-4-carboxamide (10-formyl THF route): step 1/1. It functions in the pathway purine metabolism; IMP biosynthesis via de novo pathway; IMP from 5-formamido-1-(5-phospho-D-ribosyl)imidazole-4-carboxamide: step 1/1. The polypeptide is Bifunctional purine biosynthesis protein PurH (Shewanella frigidimarina (strain NCIMB 400)).